Reading from the N-terminus, the 433-residue chain is Enolase (433 aa).

Gln163 provides a ligand contact to (2R)-2-phosphoglycerate. Catalysis depends on Glu205, which acts as the Proton donor. Mg(2+)-binding residues include Asp242, Glu291, and Asp318. Positions 343, 372, 373, and 394 each coordinate (2R)-2-phosphoglycerate. Lys343 acts as the Proton acceptor in catalysis.

Belongs to the enolase family. It depends on Mg(2+) as a cofactor.

Its subcellular location is the cytoplasm. It localises to the secreted. It is found in the cell surface. The catalysed reaction is (2R)-2-phosphoglycerate = phosphoenolpyruvate + H2O. The protein operates within carbohydrate degradation; glycolysis; pyruvate from D-glyceraldehyde 3-phosphate: step 4/5. Catalyzes the reversible conversion of 2-phosphoglycerate (2-PG) into phosphoenolpyruvate (PEP). It is essential for the degradation of carbohydrates via glycolysis. This Methylibium petroleiphilum (strain ATCC BAA-1232 / LMG 22953 / PM1) protein is Enolase.